Consider the following 104-residue polypeptide: Complex III assembly factor LYRM7 (104 aa).

Ser-60 carries the post-translational modification Phosphoserine.

The protein belongs to the complex I LYR family. As to quaternary structure, interacts with UQCRFS1.

Its subcellular location is the mitochondrion matrix. In terms of biological role, assembly factor required for Rieske Fe-S protein UQCRFS1 incorporation into the cytochrome b-c1 (CIII) complex. Functions as a chaperone, binding to this subunit within the mitochondrial matrix and stabilizing it prior to its translocation and insertion into the late CIII dimeric intermediate within the mitochondrial inner membrane. This chain is Complex III assembly factor LYRM7 (LYRM7), found in Pongo abelii (Sumatran orangutan).